A 399-amino-acid polypeptide reads, in one-letter code: CCA-adding enzyme (399 aa).

Residues Gly28 and Arg31 each contribute to the ATP site. Gly28 and Arg31 together coordinate CTP. Mg(2+)-binding residues include Asp41 and Asp43. 5 residues coordinate ATP: Arg112, Asp155, Arg158, Arg161, and Arg164. CTP contacts are provided by Arg112, Asp155, Arg158, Arg161, and Arg164.

Belongs to the tRNA nucleotidyltransferase/poly(A) polymerase family. Bacterial CCA-adding enzyme type 3 subfamily. As to quaternary structure, homodimer. The cofactor is Mg(2+).

It catalyses the reaction a tRNA precursor + 2 CTP + ATP = a tRNA with a 3' CCA end + 3 diphosphate. It carries out the reaction a tRNA with a 3' CCA end + 2 CTP + ATP = a tRNA with a 3' CCACCA end + 3 diphosphate. Functionally, catalyzes the addition and repair of the essential 3'-terminal CCA sequence in tRNAs without using a nucleic acid template. Adds these three nucleotides in the order of C, C, and A to the tRNA nucleotide-73, using CTP and ATP as substrates and producing inorganic pyrophosphate. tRNA 3'-terminal CCA addition is required both for tRNA processing and repair. Also involved in tRNA surveillance by mediating tandem CCA addition to generate a CCACCA at the 3' terminus of unstable tRNAs. While stable tRNAs receive only 3'-terminal CCA, unstable tRNAs are marked with CCACCA and rapidly degraded. In Staphylococcus saprophyticus subsp. saprophyticus (strain ATCC 15305 / DSM 20229 / NCIMB 8711 / NCTC 7292 / S-41), this protein is CCA-adding enzyme.